Consider the following 96-residue polypeptide: RxLR effector protein PITG_11507 (96 aa).

An N-terminal signal peptide occupies residues 1 to 19 (MRLSFIIVAVSLLAGGSGA). Positions 27–59 (SDVLTSRGTNEGARTGKRSLRYDSNVERTGEED) are disordered. The short motif at 44–59 (RSLRYDSNVERTGEED) is the RxLR-dEER element. A compositionally biased stretch (basic and acidic residues) spans 46 to 55 (LRYDSNVERT).

It belongs to the RxLR effector family.

It localises to the secreted. It is found in the host nucleus. The protein localises to the host cytoplasm. Effector that enhances P.infestans colonization of Nicotiana benthamiana leaves. In Phytophthora infestans (strain T30-4) (Potato late blight agent), this protein is RxLR effector protein PITG_11507.